We begin with the raw amino-acid sequence, 47 residues long: Thionin (47 aa).

Disulfide bonds link Cys3-Cys41, Cys4-Cys33, Cys12-Cys31, and Cys16-Cys27.

This sequence belongs to the plant thionin (TC 1.C.44) family. 4 C-C subfamily.

It localises to the secreted. Functionally, thionins are small plant proteins which are toxic to animal cells. They seem to exert their toxic effect at the level of the cell membrane. Their precise function is not known. The sequence is that of Thionin (THI1) from Pyrularia pubera (Buffalo nut).